The following is a 128-amino-acid chain: NADH-quinone oxidoreductase subunit A (128 aa).

A run of 3 helical transmembrane segments spans residues 12-32, 66-86, and 96-116; these read FAIF…LSFL, FYLI…LYAW, and LGFY…VYLV.

Belongs to the complex I subunit 3 family. As to quaternary structure, NDH-1 is composed of 14 different subunits. Subunits NuoA, H, J, K, L, M, N constitute the membrane sector of the complex.

It localises to the cell membrane. The catalysed reaction is a quinone + NADH + 5 H(+)(in) = a quinol + NAD(+) + 4 H(+)(out). Its function is as follows. NDH-1 shuttles electrons from NADH, via FMN and iron-sulfur (Fe-S) centers, to quinones in the respiratory chain. The immediate electron acceptor for the enzyme in this species is believed to be ubiquinone. Couples the redox reaction to proton translocation (for every two electrons transferred, four hydrogen ions are translocated across the cytoplasmic membrane), and thus conserves the redox energy in a proton gradient. The chain is NADH-quinone oxidoreductase subunit A from Baumannia cicadellinicola subsp. Homalodisca coagulata.